Reading from the N-terminus, the 306-residue chain is Mitochondrial uncoupling protein 1 (306 aa).

Solcar repeat units lie at residues 9-102, 112-203, and 212-296; these read LSLP…VKNL, VPLS…VKET, and DNVV…AKKY. 6 helical membrane-spanning segments follow: residues 15–35, 71–91, 118–138, 177–197, 218–238, and 269–289; these read FACSAFAACVGEVCTIPLDTA, LRSLWKGVVPGLHRQCLFGGL, ILAGLTTGALGIMVANPTDLV, TGLGPNVARNAIINAAELASY, ILSGLGAGFFAVCIGSPVDVV, and YKGFIPNFGRLGSWNVIMFLT.

Belongs to the mitochondrial carrier (TC 2.A.29) family. As to expression, widely expressed.

It is found in the mitochondrion inner membrane. In terms of biological role, PUMPS are mitochondrial transporter proteins that create proton leaks across the inner mitochondrial membrane, thus uncoupling oxidative phosphorylation. This leads to a decrease in the efficiency of oxidative phosphorylation and an increase in heat production. Is involved in protecting plant cells against oxidative stress damage and maintaining the redox balance of the mitochondrial electron transport chain to facilitate photosynthetic metabolism. May play a regulatory role during photorespiration. The sequence is that of Mitochondrial uncoupling protein 1 (PUMP1) from Arabidopsis thaliana (Mouse-ear cress).